The chain runs to 711 residues: Far upstream element-binding protein 2 (711 aa).

A disordered region spans residues 1 to 147 (MSDYSTGGPP…HPPPRTSMTE (147 aa)). An N-acetylserine modification is found at Ser2. Positions 8–17 (GPPPGPPPPA) are enriched in pro residues. 2 stretches are compositionally biased toward gly residues: residues 18–28 (GGGGGAGGAGG) and 36–68 (GAGDRGGGGPGGGGPGGGSAGGPSQPPGGGGPG). Omega-N-methylarginine is present on Arg40. At Lys87 the chain carries N6-acetyllysine. Position 99 is a phosphoserine (Ser99). A Phosphothreonine modification is found at Thr100. A compositionally biased stretch (basic and acidic residues) spans 110–122 (RQLEDGDQPESKK). Lys121 participates in a covalent cross-link: Glycyl lysine isopeptide (Lys-Gly) (interchain with G-Cter in SUMO1); alternate. Lys121 is covalently cross-linked (Glycyl lysine isopeptide (Lys-Gly) (interchain with G-Cter in SUMO2); alternate). A phosphoserine mark is found at Ser125, Ser129, Ser131, Ser181, Ser184, Ser193, and Ser274. KH domains are found at residues 144–208 (SMTE…KMML), 233–299 (GTVQ…CEMV), and 322–386 (GGGI…ARII). Positions 392–429 (SLRSGPPGPPGGPGMPPGGRGRGRGQGNWGPPGGEMTF) are disordered. Pro residues predominate over residues 397–407 (PPGPPGGPGMP). Positions 408-424 (PGGRGRGRGQGNWGPPG) are enriched in gly residues. An omega-N-methylarginine mark is found at Arg411, Arg413, Arg415, and Arg442. A KH 4 domain is found at 424-491 (GGEMTFSIPT…QQIDHAKQLI (68 aa)). Ser480 carries the phosphoserine modification. The disordered stretch occupies residues 497–569 (GPLCPVGPGP…HDPSKAAAAA (73 aa)). 2 stretches are compositionally biased toward pro residues: residues 501 to 520 (PVGPGPGGPGPAGPMGPFNP) and 528 to 542 (PGAPPHAGGPPPHQY). Residues 571–582 (DPNAAWAAYYSH) form repeat 1. Positions 571–684 (DPNAAWAAYY…SAAWAEYYRQ (114 aa)) are 4 X 12 AA imperfect repeats. The interval 583-711 (YYQQPPGPVP…PTQQGQQQAQ (129 aa)) is disordered. Residues 587 to 613 (PPGPVPGPAPAPAAPPAQGEPPQPPPT) are compositionally biased toward pro residues. Repeat copies occupy residues 617 to 628 (DYTKAWEEYYKK), 643 to 654 (DYTKAWEEYYKK), and 673 to 684 (DYSAAWAEYYRQ).

Belongs to the KHSRP family. As to quaternary structure, part of a ternary complex containing FUBP2, PTBP1, PTBP2 and HNRPH1. Interacts with PARN. Interacts with PQBP1. In terms of processing, phosphorylation at Ser-193 leads to the unfolding of the unstable KH domain 1, creating a site for 14-3-3 YWHAZ binding, which promotes nuclear localization and impairs the RNA degradation function. Detected in neural and non-neural cell lines.

Its subcellular location is the nucleus. The protein localises to the cytoplasm. Its function is as follows. Binds to the dendritic targeting element and may play a role in mRNA trafficking. Part of a ternary complex that binds to the downstream control sequence (DCS) of the pre-mRNA. Mediates exon inclusion in transcripts that are subject to tissue-specific alternative splicing. May interact with single-stranded DNA from the far-upstream element (FUSE). May activate gene expression. Also involved in degradation of inherently unstable mRNAs that contain AU-rich elements (AREs) in their 3'-UTR, possibly by recruiting degradation machinery to ARE-containing mRNAs. The sequence is that of Far upstream element-binding protein 2 (KHSRP) from Homo sapiens (Human).